A 285-amino-acid chain; its full sequence is Acetylglutamate kinase (285 aa).

Residues 64-65 (GG), arginine 86, and asparagine 180 each bind substrate.

It belongs to the acetylglutamate kinase family. ArgB subfamily.

The protein resides in the plastid. It is found in the chloroplast. It catalyses the reaction N-acetyl-L-glutamate + ATP = N-acetyl-L-glutamyl 5-phosphate + ADP. It functions in the pathway amino-acid biosynthesis; L-arginine biosynthesis; N(2)-acetyl-L-ornithine from L-glutamate: step 2/4. Its function is as follows. Catalyzes the ATP-dependent phosphorylation of N-acetyl-L-glutamate. The sequence is that of Acetylglutamate kinase from Gracilaria tenuistipitata var. liui (Red alga).